A 271-amino-acid chain; its full sequence is L-aspartate dehydrogenase (271 aa).

2 residues coordinate NAD(+): A124 and N192. Residue H222 is part of the active site.

This sequence belongs to the L-aspartate dehydrogenase family.

It carries out the reaction L-aspartate + NADP(+) + H2O = oxaloacetate + NH4(+) + NADPH + H(+). It catalyses the reaction L-aspartate + NAD(+) + H2O = oxaloacetate + NH4(+) + NADH + H(+). It functions in the pathway cofactor biosynthesis; NAD(+) biosynthesis; iminoaspartate from L-aspartate (dehydrogenase route): step 1/1. In terms of biological role, specifically catalyzes the NAD or NADP-dependent dehydrogenation of L-aspartate to iminoaspartate. This chain is L-aspartate dehydrogenase, found in Methanosarcina acetivorans (strain ATCC 35395 / DSM 2834 / JCM 12185 / C2A).